Reading from the N-terminus, the 318-residue chain is Ribosomal RNA small subunit methyltransferase H (318 aa).

S-adenosyl-L-methionine contacts are provided by residues 37–39, aspartate 57, phenylalanine 83, aspartate 104, and glutamine 111; that span reads GGH.

The protein belongs to the methyltransferase superfamily. RsmH family.

Its subcellular location is the cytoplasm. It catalyses the reaction cytidine(1402) in 16S rRNA + S-adenosyl-L-methionine = N(4)-methylcytidine(1402) in 16S rRNA + S-adenosyl-L-homocysteine + H(+). Functionally, specifically methylates the N4 position of cytidine in position 1402 (C1402) of 16S rRNA. This Neisseria gonorrhoeae (strain ATCC 700825 / FA 1090) protein is Ribosomal RNA small subunit methyltransferase H.